The primary structure comprises 57 residues: Large ribosomal subunit protein bL32 (57 aa).

It belongs to the bacterial ribosomal protein bL32 family.

In Staphylococcus saprophyticus subsp. saprophyticus (strain ATCC 15305 / DSM 20229 / NCIMB 8711 / NCTC 7292 / S-41), this protein is Large ribosomal subunit protein bL32.